The chain runs to 447 residues: Putative branched-chain amino acid carrier protein SSP1343 (447 aa).

12 helical membrane-spanning segments follow: residues 6–26 (WIIGFTLFAMFFGAGNLIFPP), 40–60 (ILAFALTGIGLPLLGVIVGAL), 74–94 (PKFSIIFLIIIYLTIGPLFAI), 116–136 (LALFIFTVIYFLIVLYLCINP), 143–163 (IGSLLTPLLLITILAMIVKGF), 192–212 (GYLTMDAIAAIAFSMIVVNAV), 228–248 (LMAGIIAAVALMFIYISLGYI), 289–309 (LLGIIVALACLTTACGLVVAV), 324–344 (IYVIIFTLISFILANQGLNSV), 349–369 (VPVLSIVYPIAITSVLLILLA), 381–401 (IPVAIVSIVSILSMIHTQGWI), and 416–436 (LEWFPIAIVTTIIGYIVAAMV).

The protein belongs to the branched chain amino acid transporter family.

Its subcellular location is the cell membrane. Functionally, component of the transport system for branched-chain amino acids (leucine, isoleucine and valine), which is coupled to a proton motive force. The chain is Putative branched-chain amino acid carrier protein SSP1343 from Staphylococcus saprophyticus subsp. saprophyticus (strain ATCC 15305 / DSM 20229 / NCIMB 8711 / NCTC 7292 / S-41).